Here is a 468-residue protein sequence, read N- to C-terminus: Chromosomal replication initiator protein DnaA (468 aa).

The segment at 1 to 84 is domain I, interacts with DnaA modulators; sequence MSSSLWLQCL…RFEVGSRPVA (84 aa). Positions 81 to 104 are disordered; sequence RPVAAPKPAPTRTPADVAAESSAP. Positions 84 to 131 are domain II; it reads AAPKPAPTRTPADVAAESSAPAQLQARKPVHKTWDDDAQAIADINHRS. Residues 132–348 form a domain III, AAA+ region region; that stretch reads NVNPKHKFNN…GALNRVIANA (217 aa). Positions 176, 178, 179, and 180 each coordinate ATP. Residues 349-468 form a domain IV, binds dsDNA region; sequence NFTGRPITID…YSNLIRTLSS (120 aa).

Belongs to the DnaA family. As to quaternary structure, oligomerizes as a right-handed, spiral filament on DNA at oriC.

Its subcellular location is the cytoplasm. Its function is as follows. Plays an essential role in the initiation and regulation of chromosomal replication. ATP-DnaA binds to the origin of replication (oriC) to initiate formation of the DNA replication initiation complex once per cell cycle. Binds the DnaA box (a 9 base pair repeat at the origin) and separates the double-stranded (ds)DNA. Forms a right-handed helical filament on oriC DNA; dsDNA binds to the exterior of the filament while single-stranded (ss)DNA is stabiized in the filament's interior. The ATP-DnaA-oriC complex binds and stabilizes one strand of the AT-rich DNA unwinding element (DUE), permitting loading of DNA polymerase. After initiation quickly degrades to an ADP-DnaA complex that is not apt for DNA replication. Binds acidic phospholipids. This is Chromosomal replication initiator protein DnaA from Vibrio campbellii (strain ATCC BAA-1116).